Consider the following 481-residue polypeptide: UDP-glycosyltransferase 88F3 (481 aa).

UDP-alpha-D-glucose is bound by residues Ser-288, 357–358 (WA), 375–383 (HCGWNSVLE), and 397–400 (YAEQ).

Belongs to the UDP-glycosyltransferase family.

Glycosyltransferase that may possess chalcone and dihydrochalcone 2'-O-glucosyltransferase activity. The chain is UDP-glycosyltransferase 88F3 from Pyrus communis (Pear).